We begin with the raw amino-acid sequence, 766 residues long: Serine/threonine-protein kinase tousled-like 1 (766 aa).

The segment at 1 to 198 is disordered; the sequence is MSVQSSSGSL…PSPTALAFGD (198 aa). Positions 20-33 are enriched in low complexity; it reads STSPTPGSAAAARS. T38 carries the post-translational modification Phosphothreonine. Residues 43-64 show a composition bias toward basic and acidic residues; sequence RPREGAMDELHSLDPRRQELLE. A phosphoserine mark is found at S54, S77, and S80. Residues 68 to 85 show a composition bias toward low complexity; that stretch reads TGVATGSTGSTGSCSVGA. Residues 87–103 are compositionally biased toward polar residues; that stretch reads ASTNNESSNHSFGSLGS. Residues 105 to 121 are compositionally biased toward basic and acidic residues; it reads SDKESETPEKKQSESSR. 4 positions are modified to phosphoserine: S134, S159, S174, and S176. The span at 170 to 192 shows a compositional bias: low complexity; that stretch reads SPQNSHSHSTPSSSVRPNSPSPT. Residues 229–280 adopt a coiled-coil conformation; sequence NQDLEKKEGRIDDLLRANCDLRRQIDDQQKLLEKYKERLNKCISMSKKLLIE. The tract at residues 344–381 is disordered; it reads KLLGKRKPPTANNSQAPATNSEAKQRKTKAVNGAENDP. The segment covering 353–365 has biased composition (polar residues); the sequence is TANNSQAPATNSE. The stretch at 397 to 445 forms a coiled coil; sequence HEQEEIFKLRLGHLKKEEAEIQAELERLERVRNLHIRELKRINNEDNSQ. Residues 456-734 form the Protein kinase domain; that stretch reads YLLLHLLGRG…VHQLANDPYL (279 aa). ATP-binding positions include 462–470 and K485; that span reads LGRGGFSEV. The active-site Proton acceptor is the D586. Position 743 is a phosphoserine (S743). Positions 745 to 766 are disordered; sequence GNLHMSGLTATPTPPSSSIITY.

It belongs to the protein kinase superfamily. Ser/Thr protein kinase family. In terms of assembly, heterodimer with TLK2. The cofactor is Mg(2+). As to expression, ubiquitously expressed in all tissues examined.

The protein localises to the nucleus. It carries out the reaction L-seryl-[protein] + ATP = O-phospho-L-seryl-[protein] + ADP + H(+). It catalyses the reaction L-threonyl-[protein] + ATP = O-phospho-L-threonyl-[protein] + ADP + H(+). Cell-cycle regulated, maximal activity in S-phase. Inactivated by phosphorylation at Ser-743, potentially by CHEK1. Rapidly and transiently inhibited by phosphorylation following the generation of DNA double-stranded breaks during S-phase. This is cell cycle checkpoint and ATM-pathway dependent and appears to regulate processes involved in chromatin assembly. Isoform 3 protects the cells from the ionizing radiation by facilitating the repair of DSBs. In vitro, phosphorylates histone H3 at 'Ser-10'. In Mus musculus (Mouse), this protein is Serine/threonine-protein kinase tousled-like 1 (Tlk1).